Here is a 607-residue protein sequence, read N- to C-terminus: Inactive metallocarboxypeptidase ECM14 (607 aa).

The signal sequence occupies residues 1 to 21 (MRLFTHGQVLALLAFVNTISA). A propeptide spanning residues 22–174 (IPSFSTNSYP…QTIYESYPSP (153 aa)) is cleaved from the precursor. In terms of domain architecture, Peptidase M14 spans 202 to 522 (NYQPLSVIVP…NAVMMLGRFL (321 aa)). Positions 264 and 267 each coordinate Zn(2+). Residues 264-267 (HARE), Arg-322, and 339-340 (DR) each bind substrate. Residues Cys-333 and Cys-356 are joined by a disulfide bond. The N-linked (GlcNAc...) asparagine glycan is linked to Asn-349. His-396 is a binding site for Zn(2+). 397–398 (SY) is a substrate binding site. The interval 539-607 (QRPNKDDKPI…GWGFRRLRKR (69 aa)) is disordered. The segment covering 550-571 (NDDDDDDNDDDDDDDDDADTND) has biased composition (acidic residues). Residues 573–590 (GIGRKDDSWVPDEYKGDN) are compositionally biased toward basic and acidic residues.

The protein belongs to the peptidase M14 family. Zn(2+) is required as a cofactor.

Its subcellular location is the vacuole. It is found in the secreted. Functionally, inactive carboxypeptidase that may play a role in cell wall organization and biogenesis. This Ajellomyces capsulatus (strain NAm1 / WU24) (Darling's disease fungus) protein is Inactive metallocarboxypeptidase ECM14 (ECM14).